A 313-amino-acid polypeptide reads, in one-letter code: Expansin-like A4 (313 aa).

The N-terminal stretch at 1–30 is a signal peptide; sequence MDDNGDVHFCHRATAVVALLLLHLVVVANA. In terms of domain architecture, Expansin-like EG45 spans 59–173; the sequence is GGACGFGAAP…RRIPCEYRES (115 aa). A glycan (N-linked (GlcNAc...) asparagine) is linked at Asn124. The region spanning 188–281 is the Expansin-like CBD domain; it reads THLAIRFLYQ…DWRPGEVYDT (94 aa).

The protein belongs to the expansin family. Expansin-like A subfamily.

Its subcellular location is the secreted. The protein is Expansin-like A4 (EXLA4) of Oryza sativa subsp. japonica (Rice).